The primary structure comprises 362 residues: Zinc phosphodiesterase ELAC protein 1 (362 aa).

Positions 62, 64, 66, 67, 181, 252, and 312 each coordinate Zn(2+). D66 (proton acceptor) is an active-site residue.

This sequence belongs to the RNase Z family. As to quaternary structure, homodimer. The cofactor is Zn(2+).

Its subcellular location is the cytoplasm. The protein resides in the cytosol. The protein localises to the nucleus. It catalyses the reaction Endonucleolytic cleavage of RNA, removing extra 3' nucleotides from tRNA precursor, generating 3' termini of tRNAs. A 3'-hydroxy group is left at the tRNA terminus and a 5'-phosphoryl group is left at the trailer molecule.. Its function is as follows. Zinc phosphodiesterase, which displays some tRNA 3'-processing endonuclease activity. Specifically involved in tRNA repair: acts downstream of the ribosome-associated quality control (RQC) pathway by removing a 2',3'-cyclic phosphate from tRNAs following cleavage by ANKZF1. tRNAs are then processed by TRNT1. This chain is Zinc phosphodiesterase ELAC protein 1 (Elac1), found in Mus musculus (Mouse).